Reading from the N-terminus, the 184-residue chain is Putative tetraheme cytochrome-c type (184 aa).

Over 1–14 (MSKHAASSAKRFSL) the chain is Cytoplasmic. The helical transmembrane segment at 15–35 (LALGLMFVGGIVFVWAVDFGI) threads the bilayer. Residues 36 to 184 (KTTNTLEFCT…HEPTEPDDAS (149 aa)) lie on the Periplasmic side of the membrane. Heme is bound by residues C44, C47, M50, C73, C76, and H77. K89 and D95 together coordinate substrate. 8 residues coordinate heme: D95, C133, C136, H137, C165, C168, H169, and H174.

Belongs to the NapC/NirT/NrfH family. Binds 4 heme groups per subunit.

It localises to the cell inner membrane. This is Putative tetraheme cytochrome-c type from Allochromatium vinosum (strain ATCC 17899 / DSM 180 / NBRC 103801 / NCIMB 10441 / D) (Chromatium vinosum).